The chain runs to 158 residues: MVTGGMASKWDQKGMDIAYEEAALGYKEGGVPIGGCLINNKDGSVLGRGHNMRFQKGSATLHGEISTLENCGRLEGKVYKDTTLYTTLSPCDMCTGAIIMYGIPRCVVGENVNFKSKGEKYLQTRGHEVVVVDDERCKKIMKQFIDERPQDWFEDIGE.

In terms of domain architecture, CMP/dCMP-type deaminase spans 9–129; sequence KWDQKGMDIA…KYLQTRGHEV (121 aa). Residue asparagine 51 participates in substrate binding. Histidine 62 serves as a coordination point for Zn(2+). The Proton donor role is filled by glutamate 64. Residues cysteine 91 and cysteine 94 each contribute to the Zn(2+) site. Aspartate 155 provides a ligand contact to substrate.

It belongs to the cytidine and deoxycytidylate deaminase family. As to quaternary structure, homodimer. It depends on Zn(2+) as a cofactor.

Its subcellular location is the cytoplasm. The protein resides in the nucleus. The catalysed reaction is cytosine + H2O + H(+) = uracil + NH4(+). Its pathway is pyrimidine metabolism; UMP biosynthesis via salvage pathway; uracil from cytosine: step 1/1. Catalyzes the hydrolytic deamination of cytosine to uracil or 5-methylcytosine to thymine. Is involved in the pyrimidine salvage pathway, which allows the cell to utilize cytosine for pyrimidine nucleotide synthesis. This Saccharomyces cerevisiae (strain ATCC 204508 / S288c) (Baker's yeast) protein is Cytosine deaminase.